The primary structure comprises 413 residues: Putative competence-damage inducible protein (413 aa).

The protein belongs to the CinA family.

This is Putative competence-damage inducible protein from Desulforudis audaxviator (strain MP104C).